A 156-amino-acid chain; its full sequence is Large ribosomal subunit protein uL15 (156 aa).

Over residues 1-11 (MKLNDLRDKPG) the composition is skewed to basic and acidic residues. The segment at 1-40 (MKLNDLRDKPGSVKARKRVGRGIGSGTGKTGGRGVKGQKS) is disordered. Residues 21-35 (RGIGSGTGKTGGRGV) show a composition bias toward gly residues.

The protein belongs to the universal ribosomal protein uL15 family. As to quaternary structure, part of the 50S ribosomal subunit.

Binds to the 23S rRNA. This is Large ribosomal subunit protein uL15 from Brucella anthropi (strain ATCC 49188 / DSM 6882 / CCUG 24695 / JCM 21032 / LMG 3331 / NBRC 15819 / NCTC 12168 / Alc 37) (Ochrobactrum anthropi).